Reading from the N-terminus, the 204-residue chain is MSDLRITEAFLYMDYLCFRALCCKGPPPARPEYDLVCIGLTGSGKTSLLSELCSESPENVVSTTGFSIKAVPFQNAVLNVKELGGADNIRKYWSRYYQGSQGVIFVLDSASSEDDLETARNELHSALQHPQLCTLPFLILANHQDKPAARSVQEIKKYFELEPLARGKRWILQPCSLDDVDTLKDSFSQLINLLEEKDHEAVRM.

GTP is bound by residues 39–46 (GLTGSGKT), 82–86 (ELGGA), and 142–145 (NHQD).

Belongs to the small GTPase superfamily. Arf family.

The sequence is that of ADP-ribosylation factor-like protein 15 (Arl15) from Mus musculus (Mouse).